A 426-amino-acid polypeptide reads, in one-letter code: Enolase (426 aa).

Residue Gln165 participates in (2R)-2-phosphoglycerate binding. Glu209 (proton donor) is an active-site residue. 3 residues coordinate Mg(2+): Asp244, Glu287, and Asp313. The (2R)-2-phosphoglycerate site is built by Lys338, Arg367, Ser368, and Lys389. Lys338 (proton acceptor) is an active-site residue.

It belongs to the enolase family. Mg(2+) is required as a cofactor.

Its subcellular location is the cytoplasm. It is found in the secreted. The protein resides in the cell surface. The catalysed reaction is (2R)-2-phosphoglycerate = phosphoenolpyruvate + H2O. Its pathway is carbohydrate degradation; glycolysis; pyruvate from D-glyceraldehyde 3-phosphate: step 4/5. In terms of biological role, catalyzes the reversible conversion of 2-phosphoglycerate (2-PG) into phosphoenolpyruvate (PEP). It is essential for the degradation of carbohydrates via glycolysis. This Methanococcus maripaludis (strain C5 / ATCC BAA-1333) protein is Enolase.